We begin with the raw amino-acid sequence, 367 residues long: Gelsolin-like protein 1 (367 aa).

Positions 1–185 (MATGLIKAKE…GQKQQIYVHE (185 aa)) are actin binding. 2 Gelsolin-like repeats span residues 56 to 141 (NFKV…ELFR) and 179 to 225 (QQIY…KAMQ). The tract at residues 106-109 (DEYG) is actin-actin interfilament contact point. Positions 186–295 (VPLVKERLDH…LKTTEVKRGA (110 aa)) are actin binding, Actin-severing. Residues 235–257 (PKAEAETLEDESTPESHKFYTSL) are disordered. One copy of the Gelsolin-like 3 repeat lies at 287 to 322 (KTTEVKRGAVNSKDFSSNDVFILDTGDQCFVWVGKG). Residues 296-366 (VNSKDFSSND…LCKAFNVAIA (71 aa)) are actin-severing, Ca-sensitive.

This sequence belongs to the villin/gelsolin family. In terms of assembly, interacts with actin monomers and filaments. Expressed in circular and longitudinal muscle, pseudohearts, pharynx and gizzard. Also expressed in male germ cells at the proximal pole of primary spermatocytes in 16 cell-stage morulae, and in the distal parts of the spermatocytes in 32 and 64 cell-stage morulae. In the spermatids of the 128 cell-stage morulae it is expressed at the proximal pole of the elongated nucleus and the distal pole near the base of the flagellae.

It is found in the cytoplasm. Its subcellular location is the cytoskeleton. Functionally, calcium-regulated protein that binds to the plus (or barbed) ends of actin monomers or filaments, preventing monomer exchange (end-blocking or capping). Can promote the assembly of monomers into filaments (nucleation) as well as sever existing filaments. The sequence is that of Gelsolin-like protein 1 from Lumbricus terrestris (Common earthworm).